We begin with the raw amino-acid sequence, 517 residues long: Beta-glucosidase 1 (517 aa).

The signal sequence occupies residues 1–22 (MEDVLTLITMIVLLLLAFHGFG). Residues Q48, H145, and 190–191 (NE) each bind a beta-D-glucoside. E191 functions as the Proton donor in the catalytic mechanism. A disulfide bond links C210 and C217. N-linked (GlcNAc...) asparagine glycosylation is found at N216 and N221. Y333 and E406 together coordinate a beta-D-glucoside. The active-site Nucleophile is E406. A glycan (N-linked (GlcNAc...) asparagine) is linked at N441. The a beta-D-glucoside site is built by W451 and F467. Residues N473 and N512 are each glycosylated (N-linked (GlcNAc...) asparagine).

Belongs to the glycosyl hydrolase 1 family.

It carries out the reaction Hydrolysis of terminal, non-reducing beta-D-glucosyl residues with release of beta-D-glucose.. The protein is Beta-glucosidase 1 of Arabidopsis thaliana (Mouse-ear cress).